Reading from the N-terminus, the 396-residue chain is 1-deoxy-D-xylulose 5-phosphate reductoisomerase (396 aa).

Residues Thr10, Gly11, Ser12, Ile13, Asn38, and Asn123 each coordinate NADPH. A 1-deoxy-D-xylulose 5-phosphate-binding site is contributed by Lys124. Glu125 is an NADPH binding site. Asp149 contributes to the Mn(2+) binding site. 1-deoxy-D-xylulose 5-phosphate-binding residues include Ser150, Glu151, Ser185, and His208. Glu151 provides a ligand contact to Mn(2+). Gly214 lines the NADPH pocket. 1-deoxy-D-xylulose 5-phosphate contacts are provided by Ser221, Asn226, Lys227, and Glu230. Glu230 lines the Mn(2+) pocket.

This sequence belongs to the DXR family. Mg(2+) is required as a cofactor. Requires Mn(2+) as cofactor.

The enzyme catalyses 2-C-methyl-D-erythritol 4-phosphate + NADP(+) = 1-deoxy-D-xylulose 5-phosphate + NADPH + H(+). The protein operates within isoprenoid biosynthesis; isopentenyl diphosphate biosynthesis via DXP pathway; isopentenyl diphosphate from 1-deoxy-D-xylulose 5-phosphate: step 1/6. In terms of biological role, catalyzes the NADPH-dependent rearrangement and reduction of 1-deoxy-D-xylulose-5-phosphate (DXP) to 2-C-methyl-D-erythritol 4-phosphate (MEP). In Shewanella pealeana (strain ATCC 700345 / ANG-SQ1), this protein is 1-deoxy-D-xylulose 5-phosphate reductoisomerase.